A 400-amino-acid polypeptide reads, in one-letter code: MEDGVYEPPDLTPEERMELENIRRRKQELLVEIQRLREELSEAMSEVEGLEANEGSKTLQRNRKMAMGRKKFNMDPKKGIQFLVEHELLQNTPEEIARFLYKGEGLNKTAIGDYLGEREELNLSVLHAFVDLHEFTDLNLVQALRQFLWSFRLPGEAQKIDRMMEAFAQRYCLCNPGVFQSTDTCYVLSFAVIMLNTSLHNPNVRDKPGLERFVAMNRGINEGGDLPEDLLRNLYDSIRNEPFKIPEDDGNDLTHTFFNPDREGWLLKLGGGRVKTWKRRWFILTDNCLYYFEYTTDKEPRGIIPLENLSIREVDDPRKPNCFELYIPNNKGQLIKACKTEADGRVVEGNHMVYRISAPTQEEKDEWIKSIQAAVSVDPFYEMLAARKKRISVKKKQEQP.

Residues 10-67 (DLTPEERMELENIRRRKQELLVEIQRLREELSEAMSEVEGLEANEGSKTLQRNRKMAM) are a coiled coil. Residues 72 to 201 (FNMDPKKGIQ…VIMLNTSLHN (130 aa)) form the SEC7 domain. A PH domain is found at 259–376 (NPDREGWLLK…WIKSIQAAVS (118 aa)). Residues 268–276 (KLGGGRVKT), Arg-280, Tyr-291, Arg-301, Lys-339, Asn-350, and His-351 contribute to the a 1,2-diacyl-sn-glycero-3-phospho-(1D-myo-inositol-3,4,5-trisphosphate) site. The interval 387–395 (RKKRISVKK) is C-terminal autoinhibitory region.

In terms of assembly, heteromer. Composed of TAMALIN, CYTH2 and at least one GRM1. Interacts with ARRB1. Interacts with ARL4D; the interaction is direct. Directly interacts with CCDC120 through the coiled coil domain; this interaction stabilizes CCDC120, possibly by preventing its ubiquitination, and is required for neurite growth in a neuroblastoma cell line. Interacts with FRMD4A. Interacts (via N-terminal domain) with INAVA (via N-terminal domain). Present in all tissues tested, with highest protein levels in brain and adrenal.

The protein localises to the cell membrane. It is found in the cytoplasm. It localises to the cell projection. The protein resides in the growth cone. Its subcellular location is the cell junction. The protein localises to the tight junction. It is found in the adherens junction. In terms of biological role, acts as a guanine-nucleotide exchange factor (GEF). Promotes guanine-nucleotide exchange on ARF1, ARF3 and ARF6. Activates ARF factors through replacement of GDP with GTP. The cell membrane form, in association with ARL4 proteins, recruits ARF6 to the plasma membrane. Involved in neurite growth. The chain is Cytohesin-2 (Cyth2) from Mus musculus (Mouse).